A 261-amino-acid chain; its full sequence is Pimeloyl-[acyl-carrier protein] methyl ester esterase (261 aa).

The 226-residue stretch at 16–241 (LVLLHGWGLN…HAAHAPFISH (226 aa)) folds into the AB hydrolase-1 domain. Substrate-binding positions include W22, 82-83 (SL), and 143-147 (FLALQ). The Nucleophile role is filled by S82. Catalysis depends on residues D207 and H235. H235 serves as a coordination point for substrate.

This sequence belongs to the AB hydrolase superfamily. Carboxylesterase BioH family. Monomer.

It is found in the cytoplasm. It carries out the reaction 6-carboxyhexanoyl-[ACP] methyl ester + H2O = 6-carboxyhexanoyl-[ACP] + methanol + H(+). Its pathway is cofactor biosynthesis; biotin biosynthesis. Its function is as follows. The physiological role of BioH is to remove the methyl group introduced by BioC when the pimeloyl moiety is complete. It allows to synthesize pimeloyl-ACP via the fatty acid synthetic pathway through the hydrolysis of the ester bonds of pimeloyl-ACP esters. The polypeptide is Pimeloyl-[acyl-carrier protein] methyl ester esterase (Photorhabdus laumondii subsp. laumondii (strain DSM 15139 / CIP 105565 / TT01) (Photorhabdus luminescens subsp. laumondii)).